Reading from the N-terminus, the 117-residue chain is UPF0295 protein Bsph_0336 (117 aa).

2 helical membrane-spanning segments follow: residues 13–33 (SFAL…IFFK) and 37–57 (ILVL…TVVY).

It belongs to the UPF0295 family.

The protein resides in the cell membrane. The sequence is that of UPF0295 protein Bsph_0336 from Lysinibacillus sphaericus (strain C3-41).